The primary structure comprises 118 residues: Co-chaperonin GroES (118 aa).

Belongs to the GroES chaperonin family. In terms of assembly, heptamer of 7 subunits arranged in a ring. Interacts with the chaperonin GroEL.

The protein localises to the cytoplasm. Together with the chaperonin GroEL, plays an essential role in assisting protein folding. The GroEL-GroES system forms a nano-cage that allows encapsulation of the non-native substrate proteins and provides a physical environment optimized to promote and accelerate protein folding. GroES binds to the apical surface of the GroEL ring, thereby capping the opening of the GroEL channel. This is Co-chaperonin GroES from Helicobacter pylori (strain Shi470).